The primary structure comprises 257 residues: RING1 and YY1-binding protein B (257 aa).

2 disordered regions span residues 1–24 (MGDKKSPTRPKRQAKPTADNGFWD) and 45–257 (RKGT…DESF). The segment at 19–48 (DNGFWDCSVCTFRNSAEAFKCSICDVRKGT) adopts a RanBP2-type zinc-finger fold. Over residues 74 to 129 (PKKEKKEKPERPEKDRAEEERPDINPPDEHPVEQRDKDKSEKEQPEKEKKDREKEI) the composition is skewed to basic and acidic residues. The span at 149-168 (HQSPPSERNSIQSGKSTTKT) shows a compositional bias: polar residues. A compositionally biased stretch (basic residues) spans 169-178 (KNSHNSRPKL). A compositionally biased stretch (low complexity) spans 209–233 (TSSTSSSTVTSSASSEQQHQSSGSE).

Its subcellular location is the nucleus. The protein localises to the cytoplasm. Its function is as follows. May be implicated in the regulation of the transcription as a repressor of the transcriptional activity of E4TF1. This Danio rerio (Zebrafish) protein is RING1 and YY1-binding protein B (rybpb).